Consider the following 352-residue polypeptide: B1 bradykinin receptor (352 aa).

The Extracellular segment spans residues 1 to 41 (MAAQTLLELQPSNQSQLSALNTTSCDNAREAWDLLYQVLPI). 2 N-linked (GlcNAc...) asparagine glycosylation sites follow: Asn13 and Asn21. Residues 42 to 62 (FILTICAFGLLGNLFVLSVFL) traverse the membrane as a helical segment. Topologically, residues 63–72 (LLRRRLTVAE) are cytoplasmic. The helical transmembrane segment at 73-93 (IYLVNLAASDLVFVLGLPFWA) threads the bilayer. Residues 94–110 (QNIWNQFNWPFGDLLCR) are Extracellular-facing. Cysteines 109 and 188 form a disulfide. The helical transmembrane segment at 111–131 (VVNGVIKANLFISIFLMVAIS) threads the bilayer. The Cytoplasmic segment spans residues 132 to 153 (QDRYCVLVHPMASRRRRRRRRA). The chain crosses the membrane as a helical span at residues 154-174 (RATCMVIWAVGALLSTPTFLL). The Extracellular segment spans residues 175–206 (RSVSAVQDLNISACILLLPHQAWHVARIVELN). Asn184 carries N-linked (GlcNAc...) asparagine glycosylation. Residues 207–227 (VLGFLLPLAAIIFFNGHILAS) traverse the membrane as a helical segment. Residues 228–250 (LRGQGEVSQTRIGGPKDCKTTVL) lie on the Cytoplasmic side of the membrane. The helical transmembrane segment at 251 to 271 (ILTLVAAFLVCWAPYHCFAFL) threads the bilayer. Residues 272 to 294 (EFLFQVRAVRGCFWEDFIDLGLQ) lie on the Extracellular side of the membrane. The helical transmembrane segment at 295 to 315 (LANFFAFTNSCLNPVIYVFVG) threads the bilayer. Over 316 to 326 (RLFRTKVWELY) the chain is Cytoplasmic. The S-palmitoyl cysteine moiety is linked to residue Cys329.

Belongs to the G-protein coupled receptor 1 family. Bradykinin receptor subfamily. BDKRB1 sub-subfamily.

It localises to the cell membrane. This is a receptor for bradykinin. Could be a factor in chronic pain and inflammation. The chain is B1 bradykinin receptor (BDKRB1) from Tupaia minor (Pigmy tree shrew).